The following is a 476-amino-acid chain: Proline--tRNA ligase 2 (476 aa).

The protein belongs to the class-II aminoacyl-tRNA synthetase family. ProS type 3 subfamily. As to quaternary structure, homodimer.

The protein localises to the cytoplasm. It catalyses the reaction tRNA(Pro) + L-proline + ATP = L-prolyl-tRNA(Pro) + AMP + diphosphate. In terms of biological role, catalyzes the attachment of proline to tRNA(Pro) in a two-step reaction: proline is first activated by ATP to form Pro-AMP and then transferred to the acceptor end of tRNA(Pro). In Bacillus cereus (strain ZK / E33L), this protein is Proline--tRNA ligase 2.